A 353-amino-acid chain; its full sequence is Fasciclin-like arabinogalactan protein 21 (353 aa).

The signal sequence occupies residues 1-28 (MGCCSSDCFVYFILSIALAFMAISTTLR). Residues Asn51, Asn81, Asn94, Asn200, Asn249, and Asn315 are each glycosylated (N-linked (GlcNAc...) asparagine). The FAS1 1 domain maps to 83 to 181 (TLFAIEDASF…HGVIGPFSPL (99 aa)). The 99-residue stretch at 254-352 (TILATPNLVS…GISHTLEIPH (99 aa)) folds into the FAS1 2 domain.

Belongs to the fasciclin-like AGP family.

The protein resides in the secreted. Its function is as follows. May be a cell surface adhesion protein. This Arabidopsis thaliana (Mouse-ear cress) protein is Fasciclin-like arabinogalactan protein 21 (FLA21).